Here is a 66-residue protein sequence, read N- to C-terminus: Scarabaecin (66 aa).

The first 26 residues, 1 to 26, serve as a signal peptide directing secretion; it reads MKTLTFYTLLLCAALYSNFFDCKAVA. A disulfide bridge connects residues Cys46 and Cys57.

Its subcellular location is the secreted. Its function is as follows. Possesses antifungal activity against phytopathogenic fungi such as P.oryzae, R.solani and B.cinerea but not against phytopathogenic bacteria. Shows weak activity against the insect pathogenic fungus B.bassiana and against S.aureus. Binds chitin. The polypeptide is Scarabaecin (Oryctes rhinoceros (Coconut rhinoceros beetle)).